Here is a 26-residue protein sequence, read N- to C-terminus: Thrombin-like enzyme LmrSP-3 (26 aa).

It belongs to the peptidase S1 family. Snake venom subfamily. Expressed by the venom gland.

It localises to the secreted. In terms of biological role, thrombin-like snake venom serine protease that cleaves alpha-chain of fibrinogen (FGA) releases only fibrinopeptide A. Shows coagulant, esterase and amidase activities. The sequence is that of Thrombin-like enzyme LmrSP-3 from Lachesis muta rhombeata (Bushmaster).